Here is a 65-residue protein sequence, read N- to C-terminus: Large ribosomal subunit protein bL35 (65 aa).

The interval 1–65 (MPKMKTNRAA…GRLDRMLPYL (65 aa)) is disordered. Residues 10–44 (AAKRFRKTASGKYKAGHANRSHILTKKATKRKRNL) are compositionally biased toward basic residues. Residues 50–65 (VRAEDAGRLDRMLPYL) show a composition bias toward basic and acidic residues.

This sequence belongs to the bacterial ribosomal protein bL35 family.

The polypeptide is Large ribosomal subunit protein bL35 (Xylella fastidiosa (strain M12)).